We begin with the raw amino-acid sequence, 369 residues long: Chorismate synthase (369 aa).

Positions 48 and 54 each coordinate NADP(+). FMN contacts are provided by residues R125–S127, N238–A239, G278, K293–S297, and R319.

The protein belongs to the chorismate synthase family. As to quaternary structure, homotetramer. It depends on FMNH2 as a cofactor.

It carries out the reaction 5-O-(1-carboxyvinyl)-3-phosphoshikimate = chorismate + phosphate. It participates in metabolic intermediate biosynthesis; chorismate biosynthesis; chorismate from D-erythrose 4-phosphate and phosphoenolpyruvate: step 7/7. Functionally, catalyzes the anti-1,4-elimination of the C-3 phosphate and the C-6 proR hydrogen from 5-enolpyruvylshikimate-3-phosphate (EPSP) to yield chorismate, which is the branch point compound that serves as the starting substrate for the three terminal pathways of aromatic amino acid biosynthesis. This reaction introduces a second double bond into the aromatic ring system. This is Chorismate synthase from Burkholderia pseudomallei (strain 1106a).